The chain runs to 382 residues: Mannitol-1-phosphate 5-dehydrogenase (382 aa).

3 to 14 (ALHFGAGNIGRG) lines the NAD(+) pocket.

It belongs to the mannitol dehydrogenase family.

The catalysed reaction is D-mannitol 1-phosphate + NAD(+) = beta-D-fructose 6-phosphate + NADH + H(+). In Salmonella newport (strain SL254), this protein is Mannitol-1-phosphate 5-dehydrogenase.